Here is a 255-residue protein sequence, read N- to C-terminus: Large ribosomal subunit protein uL4 (255 aa).

It belongs to the universal ribosomal protein uL4 family. Part of the 50S ribosomal subunit.

Its function is as follows. One of the primary rRNA binding proteins, this protein initially binds near the 5'-end of the 23S rRNA. It is important during the early stages of 50S assembly. It makes multiple contacts with different domains of the 23S rRNA in the assembled 50S subunit and ribosome. Forms part of the polypeptide exit tunnel. The chain is Large ribosomal subunit protein uL4 from Thermoplasma acidophilum (strain ATCC 25905 / DSM 1728 / JCM 9062 / NBRC 15155 / AMRC-C165).